The sequence spans 742 residues: uncharacterized protein (742 aa).

The tract at residues 167-471 (GIVPPEPWGH…AAGAAGGGGA (305 aa)) is disordered. Positions 205–218 (PAPPPSLFAPPPPS) are enriched in pro residues. 2 stretches are compositionally biased toward polar residues: residues 318–331 (SPATSNEISSNAVS) and 358–368 (GSPQTLSTAPS). Over residues 386–401 (TAGPAAPPTTGGPPAP) the composition is skewed to pro residues. Residues 421-432 (PLSGGVPGGAVP) show a composition bias toward low complexity. Over residues 433–447 (LGPPPTPPPAAPVTT) the composition is skewed to pro residues. Residues 448-464 (PPLASGAPVAPTGAAAG) are compositionally biased toward low complexity.

May be involved in the ESX-1 / type VII specialized secretion system (T7SS), which exports several proteins including EsxA and EsxB. Involved in DNA conjugation in the recipient strain. This is an uncharacterized protein from Mycolicibacterium smegmatis (strain MKD8) (Mycobacterium smegmatis).